A 569-amino-acid chain; its full sequence is S-(+)-linalool synthase, chloroplastic (569 aa).

A chloroplast-targeting transit peptide spans 1–39 (MALIATKISSRSCFVSAYPNNSPTFLISKFPNTVDSLSP). The (2E)-geranyl diphosphate site is built by Arg-294, Asp-331, Asp-335, Arg-472, and Asp-475. Asp-331 and Asp-335 together coordinate Mg(2+). The DDXXD motif signature appears at 331 to 335 (DDIFD). Mg(2+)-binding residues include Asp-475, Ser-479, and Glu-483.

It belongs to the terpene synthase family. Tpsb subfamily. Requires Mg(2+) as cofactor. It depends on Mn(2+) as a cofactor. Predominantly expressed in flowers but also in stems and siliques.

The protein resides in the plastid. Its subcellular location is the chloroplast. The catalysed reaction is (2E)-geranyl diphosphate + H2O = (S)-linalool + diphosphate. It functions in the pathway secondary metabolite biosynthesis; terpenoid biosynthesis. In terms of biological role, involved in monoterpene (C10) biosynthesis. The major product is (S)-linalool. The chain is S-(+)-linalool synthase, chloroplastic from Arabidopsis thaliana (Mouse-ear cress).